Here is a 184-residue protein sequence, read N- to C-terminus: MRLVILGGSGSGKSTQAQRLCSHLEITQISTGEILREAISHLSELGRHAQPYMIKGELVPDEMIIELIRLRLKKSDVIDGWVLEGYPRTAFQAEELDFLLDELGQKLDWAIYLQVPEAVMVSRSLGRSLPDDQPEIVQRRVEIFYDRTVPILEYYDRRRRLLTINGDQSPELVLQSILKLLLVT.

10–15 (GSGKST) provides a ligand contact to ATP. Positions 30–59 (STGEILREAISHLSELGRHAQPYMIKGELV) are NMP. Residues Thr-31, Arg-36, 57-59 (ELV), 85-88 (GYPR), and Gln-92 each bind AMP. An LID region spans residues 126 to 132 (GRSLPDD). ATP is bound at residue Arg-127. Residue Arg-140 participates in AMP binding. Residue Gln-168 coordinates ATP.

It belongs to the adenylate kinase family. As to quaternary structure, monomer.

It localises to the cytoplasm. The enzyme catalyses AMP + ATP = 2 ADP. It participates in purine metabolism; AMP biosynthesis via salvage pathway; AMP from ADP: step 1/1. Its function is as follows. Catalyzes the reversible transfer of the terminal phosphate group between ATP and AMP. Plays an important role in cellular energy homeostasis and in adenine nucleotide metabolism. This Nostoc sp. (strain PCC 7120 / SAG 25.82 / UTEX 2576) protein is Adenylate kinase 2.